The primary structure comprises 256 residues: Thiazole synthase (256 aa).

Lysine 96 acts as the Schiff-base intermediate with DXP in catalysis. 1-deoxy-D-xylulose 5-phosphate-binding positions include glycine 157, 184–185, and 206–207; these read AG and NT.

It belongs to the ThiG family. Homotetramer. Forms heterodimers with either ThiH or ThiS.

It localises to the cytoplasm. It catalyses the reaction [ThiS sulfur-carrier protein]-C-terminal-Gly-aminoethanethioate + 2-iminoacetate + 1-deoxy-D-xylulose 5-phosphate = [ThiS sulfur-carrier protein]-C-terminal Gly-Gly + 2-[(2R,5Z)-2-carboxy-4-methylthiazol-5(2H)-ylidene]ethyl phosphate + 2 H2O + H(+). Its pathway is cofactor biosynthesis; thiamine diphosphate biosynthesis. Its function is as follows. Catalyzes the rearrangement of 1-deoxy-D-xylulose 5-phosphate (DXP) to produce the thiazole phosphate moiety of thiamine. Sulfur is provided by the thiocarboxylate moiety of the carrier protein ThiS. In vitro, sulfur can be provided by H(2)S. The protein is Thiazole synthase of Brucella anthropi (strain ATCC 49188 / DSM 6882 / CCUG 24695 / JCM 21032 / LMG 3331 / NBRC 15819 / NCTC 12168 / Alc 37) (Ochrobactrum anthropi).